The sequence spans 439 residues: Dihydroorotate dehydrogenase (quinone), mitochondrial (439 aa).

Residues 1–22 (MMHRVGFNVIGRRSFFTVNARR) constitute a mitochondrion transit peptide. The chain crosses the membrane as a helical span at residues 37-53 (LTALLLAGSAGYLYFMN). FMN-binding positions include 119–123 (AGLDK) and serine 143. Lysine 123 serves as a coordination point for substrate. Residue 168 to 172 (NRYGF) coordinates substrate. FMN is bound by residues asparagine 215 and asparagine 245. Residue 245–250 (NVSSPN) participates in substrate binding. Residue serine 248 is the Nucleophile of the active site. FMN contacts are provided by lysine 296 and serine 324. 325 to 326 (NT) is a substrate binding site. FMN is bound by residues glycine 350, glycine 380, and 401 to 402 (YT).

This sequence belongs to the dihydroorotate dehydrogenase family. Type 2 subfamily. FMN is required as a cofactor.

The protein resides in the mitochondrion inner membrane. The catalysed reaction is (S)-dihydroorotate + a quinone = orotate + a quinol. It functions in the pathway pyrimidine metabolism; UMP biosynthesis via de novo pathway; orotate from (S)-dihydroorotate (quinone route): step 1/1. Functionally, catalyzes the conversion of dihydroorotate to orotate with quinone as electron acceptor. This is Dihydroorotate dehydrogenase (quinone), mitochondrial (URA9) from Candida glabrata (strain ATCC 2001 / BCRC 20586 / JCM 3761 / NBRC 0622 / NRRL Y-65 / CBS 138) (Yeast).